Here is a 227-residue protein sequence, read N- to C-terminus: UPF0758 protein SSA_1218 (227 aa).

The MPN domain occupies 104-226 (QIMGSQKLAR…YYSYREETDM (123 aa)). Residues histidine 175, histidine 177, and aspartate 188 each contribute to the Zn(2+) site. The JAMM motif motif lies at 175–188 (HNHPSGSVVPSRND).

Belongs to the UPF0758 family.

The sequence is that of UPF0758 protein SSA_1218 from Streptococcus sanguinis (strain SK36).